Here is a 601-residue protein sequence, read N- to C-terminus: Leucine-rich repeat-containing protein 40 (601 aa).

LRR repeat units follow at residues A33–L56, Q79–L101, L102–D124, L125–L148, N150–Q170, L171–N193, L194–M217, N219–Q239, M240–T264, K266–H285, L286–L308, L309–K334, K336–K355, I397–A420, G423–L446, K447–H469, L470–G492, L493–I516, S518–T539, L540–C563, and S565–K586.

The polypeptide is Leucine-rich repeat-containing protein 40 (lrrc40) (Danio rerio (Zebrafish)).